Reading from the N-terminus, the 98-residue chain is Large ribosomal subunit protein uL23 (98 aa).

Belongs to the universal ribosomal protein uL23 family. As to quaternary structure, part of the 50S ribosomal subunit. Contacts protein L29, and trigger factor when it is bound to the ribosome.

Its function is as follows. One of the early assembly proteins it binds 23S rRNA. One of the proteins that surrounds the polypeptide exit tunnel on the outside of the ribosome. Forms the main docking site for trigger factor binding to the ribosome. The polypeptide is Large ribosomal subunit protein uL23 (Rickettsia typhi (strain ATCC VR-144 / Wilmington)).